The primary structure comprises 199 residues: MIANKITINKIQNGTATIEVTFSKFKLADANKKDFVLEVKDSANDDASAISATELVFDANKKILTGKLNGLASNINYKISKFTLNNNEIKFDFKQEDQQELLNQYIQQAELNTIIDKANKKINIKLQNFSILNSFQDNQPVLTFDIEINKKDGITQVVHKSLTKNQLLNPNGLEIDLKDKMKNNIDYWTLAYVVWFLAI.

This sequence to U.parvum UU376.

This is an uncharacterized protein from Ureaplasma parvum serovar 3 (strain ATCC 700970).